We begin with the raw amino-acid sequence, 390 residues long: Multidrug resistance protein MdtL (390 aa).

A run of 12 helical transmembrane segments spans residues 4–24, 42–62, 69–89, 93–113, 131–151, 158–178, 199–221, 245–265, 269–289, 293–313, 316–336, and 353–375; these read FLIC…MYLV, IAFS…GKVA, PVAI…SRAT, LFLT…VVAF, LLNG…HLIM, SLFY…VFIL, LLNR…ILTF, ALTA…LSVF, TLML…SLSS, VTLF…GVAM, ALGP…IAQV, and ALNM…LMTI.

The protein belongs to the major facilitator superfamily. DHA1 family. MdtL (TC 2.A.1.2.22) subfamily.

It localises to the cell inner membrane. In Citrobacter koseri (strain ATCC BAA-895 / CDC 4225-83 / SGSC4696), this protein is Multidrug resistance protein MdtL.